The following is a 690-amino-acid chain: Proprotein convertase subtilisin/kexin type 9 (690 aa).

An N-terminal signal peptide occupies residues 1-28; it reads MGTVSSRRSWWPLPLLLLLLLGPAGARA. A propeptide spanning residues 29–150 is cleaved from the precursor; sequence QEDEDGDYEE…IEEDSSVFAQ (122 aa). The residue at position 36 (Y36) is a Sulfotyrosine. S45 is modified (phosphoserine). The Inhibitor I9 domain occupies 75–147; sequence TYVVVLKEET…VDYIEEDSSV (73 aa). In terms of domain architecture, Peptidase S8 spans 153 to 459; it reads PWNLERITPP…GWQLFCRTVW (307 aa). Active-site charge relay system residues include D184 and H224. Cystine bridges form between C221/C253 and C321/C356. Catalysis depends on S384, which acts as the Charge relay system. Residues 448-690 form a C-terminal domain region; that stretch reads GAGWQLFCRT…HLAQASQELQ (243 aa). Cystine bridges form between C455–C525, C475–C524, and C484–C507. N-linked (GlcNAc...) asparagine glycosylation is present at N531. 6 cysteine pairs are disulfide-bonded: C532–C599, C550–C598, C560–C586, C606–C677, C624–C676, and C633–C652. S686 carries the post-translational modification Phosphoserine.

Belongs to the peptidase S8 family. As to quaternary structure, monomer. Can self-associate to form dimers and higher multimers which may have increased LDLR degrading activity. The precursor protein but not the mature protein may form multimers. Interacts with APOB, VLDLR, LRP8/APOER2 and BACE1. The full-length immature form (pro-PCSK9) interacts with SCNN1A, SCNN1B and SCNN1G. The pro-PCSK9 form (via C-terminal domain) interacts with LDLR. Interacts (via the C-terminal domain) with ANXA2 (via repeat Annexin 1); the interaction inhibits the degradation of LDLR. It depends on Ca(2+) as a cofactor. Cleavage by furin and PCSK5 generates a truncated inactive protein that is unable to induce LDLR degradation. In terms of processing, undergoes autocatalytic cleavage in the endoplasmic reticulum to release the propeptide from the N-terminus and the cleavage of the propeptide is strictly required for its maturation and activation. The cleaved propeptide however remains associated with the catalytic domain through non-covalent interactions, preventing potential substrates from accessing its active site. As a result, it is secreted from cells as a propeptide-containing, enzymatically inactive protein. Post-translationally, phosphorylation protects the propeptide against proteolysis.

The protein resides in the cytoplasm. Its subcellular location is the secreted. It localises to the endosome. The protein localises to the lysosome. It is found in the cell surface. The protein resides in the endoplasmic reticulum. Its subcellular location is the golgi apparatus. With respect to regulation, its proteolytic activity is autoinhibited by the non-covalent binding of the propeptide to the catalytic domain. Inhibited by EGTA. Its function is as follows. Crucial player in the regulation of plasma cholesterol homeostasis. Binds to low-density lipid receptor family members: low density lipoprotein receptor (LDLR), very low density lipoprotein receptor (VLDLR), apolipoprotein E receptor (LRP1/APOER) and apolipoprotein receptor 2 (LRP8/APOER2), and promotes their degradation in intracellular acidic compartments. Acts via a non-proteolytic mechanism to enhance the degradation of the hepatic LDLR through a clathrin LDLRAP1/ARH-mediated pathway. May prevent the recycling of LDLR from endosomes to the cell surface or direct it to lysosomes for degradation. Can induce ubiquitination of LDLR leading to its subsequent degradation. Inhibits intracellular degradation of APOB via the autophagosome/lysosome pathway in a LDLR-independent manner. Involved in the disposal of non-acetylated intermediates of BACE1 in the early secretory pathway. Inhibits epithelial Na(+) channel (ENaC)-mediated Na(+) absorption by reducing ENaC surface expression primarily by increasing its proteasomal degradation. Regulates neuronal apoptosis via modulation of LRP8/APOER2 levels and related anti-apoptotic signaling pathways. This chain is Proprotein convertase subtilisin/kexin type 9 (PCSK9), found in Pongo pygmaeus (Bornean orangutan).